The sequence spans 464 residues: Siroheme synthase (464 aa).

Residues 1–203 form a precorrin-2 dehydrogenase /sirohydrochlorin ferrochelatase region; the sequence is MDYLPLFHKL…GQGAEAERLL (203 aa). Residues 22–23 and 43–44 each bind NAD(+); these read EI and PE. At serine 128 the chain carries Phosphoserine. Residues 216–464 form a uroporphyrinogen-III C-methyltransferase region; sequence GEVYLVGAGP…AWFEGSQQDQ (249 aa). Residue proline 225 coordinates S-adenosyl-L-methionine. The active-site Proton acceptor is the aspartate 248. The active-site Proton donor is lysine 270. S-adenosyl-L-methionine contacts are provided by residues 301-303, isoleucine 306, 331-332, methionine 383, and glycine 412; these read GGD and TA.

It in the N-terminal section; belongs to the precorrin-2 dehydrogenase / sirohydrochlorin ferrochelatase family. The protein in the C-terminal section; belongs to the precorrin methyltransferase family.

The catalysed reaction is uroporphyrinogen III + 2 S-adenosyl-L-methionine = precorrin-2 + 2 S-adenosyl-L-homocysteine + H(+). It catalyses the reaction precorrin-2 + NAD(+) = sirohydrochlorin + NADH + 2 H(+). It carries out the reaction siroheme + 2 H(+) = sirohydrochlorin + Fe(2+). The protein operates within cofactor biosynthesis; adenosylcobalamin biosynthesis; precorrin-2 from uroporphyrinogen III: step 1/1. It functions in the pathway cofactor biosynthesis; adenosylcobalamin biosynthesis; sirohydrochlorin from precorrin-2: step 1/1. It participates in porphyrin-containing compound metabolism; siroheme biosynthesis; precorrin-2 from uroporphyrinogen III: step 1/1. Its pathway is porphyrin-containing compound metabolism; siroheme biosynthesis; siroheme from sirohydrochlorin: step 1/1. The protein operates within porphyrin-containing compound metabolism; siroheme biosynthesis; sirohydrochlorin from precorrin-2: step 1/1. In terms of biological role, multifunctional enzyme that catalyzes the SAM-dependent methylations of uroporphyrinogen III at position C-2 and C-7 to form precorrin-2 via precorrin-1. Then it catalyzes the NAD-dependent ring dehydrogenation of precorrin-2 to yield sirohydrochlorin. Finally, it catalyzes the ferrochelation of sirohydrochlorin to yield siroheme. This chain is Siroheme synthase, found in Pseudomonas putida (strain W619).